Here is a 473-residue protein sequence, read N- to C-terminus: GTPase Der (473 aa).

2 EngA-type G domains span residues 3 to 167 (FTVA…GKDR) and 203 to 378 (LRVA…RVWN). GTP contacts are provided by residues 9–16 (GRPNVGKS), 56–60 (DTAGL), 119–122 (NKSE), 209–216 (GRPNAGKS), 256–260 (DTAGM), and 321–324 (NKWD). One can recognise a KH-like domain in the interval 379-463 (KRISTARLNR…PIRIHFRSPD (85 aa)).

Belongs to the TRAFAC class TrmE-Era-EngA-EngB-Septin-like GTPase superfamily. EngA (Der) GTPase family. In terms of assembly, associates with the 50S ribosomal subunit.

In terms of biological role, GTPase that plays an essential role in the late steps of ribosome biogenesis. The protein is GTPase Der of Rhizobium etli (strain ATCC 51251 / DSM 11541 / JCM 21823 / NBRC 15573 / CFN 42).